The chain runs to 396 residues: Elongation factor Tu (396 aa).

Positions 10–206 (KPHVNVGTIG…VLDTYIPEPE (197 aa)) constitute a tr-type G domain. The tract at residues 19–26 (GHVDHGKT) is G1. Residue 19–26 (GHVDHGKT) coordinates GTP. Residue threonine 26 participates in Mg(2+) binding. The segment at 60–64 (GITIN) is G2. Residues 81 to 84 (DCPG) are G3. GTP contacts are provided by residues 81 to 85 (DCPGH) and 136 to 139 (NKCD). The segment at 136–139 (NKCD) is G4. Residues 174–176 (SAT) form a G5 region.

The protein belongs to the TRAFAC class translation factor GTPase superfamily. Classic translation factor GTPase family. EF-Tu/EF-1A subfamily. As to quaternary structure, monomer.

Its subcellular location is the cytoplasm. The catalysed reaction is GTP + H2O = GDP + phosphate + H(+). Its function is as follows. GTP hydrolase that promotes the GTP-dependent binding of aminoacyl-tRNA to the A-site of ribosomes during protein biosynthesis. This is Elongation factor Tu from Psychrobacter cryohalolentis (strain ATCC BAA-1226 / DSM 17306 / VKM B-2378 / K5).